A 193-amino-acid polypeptide reads, in one-letter code: NADH-quinone oxidoreductase subunit B (193 aa).

Residues Cys-72, Cys-73, Cys-137, and Cys-167 each coordinate [4Fe-4S] cluster.

This sequence belongs to the complex I 20 kDa subunit family. In terms of assembly, NDH-1 is composed of 14 different subunits. Subunits NuoB, C, D, E, F, and G constitute the peripheral sector of the complex. [4Fe-4S] cluster is required as a cofactor.

It is found in the cell inner membrane. The catalysed reaction is a quinone + NADH + 5 H(+)(in) = a quinol + NAD(+) + 4 H(+)(out). NDH-1 shuttles electrons from NADH, via FMN and iron-sulfur (Fe-S) centers, to quinones in the respiratory chain. The immediate electron acceptor for the enzyme in this species is believed to be ubiquinone. Couples the redox reaction to proton translocation (for every two electrons transferred, four hydrogen ions are translocated across the cytoplasmic membrane), and thus conserves the redox energy in a proton gradient. The chain is NADH-quinone oxidoreductase subunit B from Phenylobacterium zucineum (strain HLK1).